Reading from the N-terminus, the 268-residue chain is Phosphatidylglycerol--prolipoprotein diacylglyceryl transferase (268 aa).

Transmembrane regions (helical) follow at residues 23 to 43 (IGLR…RWLA), 62 to 82 (LLFN…VFFY), 97 to 117 (VWEG…AMIW), 132 to 152 (FVAP…FINL), 179 to 199 (SQLY…NIFI), 206 to 226 (ASVA…VEYV), and 241 to 261 (GQAL…WAYS). Arg-145 contacts a 1,2-diacyl-sn-glycero-3-phospho-(1'-sn-glycerol).

Belongs to the Lgt family.

The protein localises to the cell inner membrane. The enzyme catalyses L-cysteinyl-[prolipoprotein] + a 1,2-diacyl-sn-glycero-3-phospho-(1'-sn-glycerol) = an S-1,2-diacyl-sn-glyceryl-L-cysteinyl-[prolipoprotein] + sn-glycerol 1-phosphate + H(+). It participates in protein modification; lipoprotein biosynthesis (diacylglyceryl transfer). In terms of biological role, catalyzes the transfer of the diacylglyceryl group from phosphatidylglycerol to the sulfhydryl group of the N-terminal cysteine of a prolipoprotein, the first step in the formation of mature lipoproteins. This chain is Phosphatidylglycerol--prolipoprotein diacylglyceryl transferase, found in Haemophilus influenzae (strain 86-028NP).